The sequence spans 68 residues: Protein SlyX homolog (68 aa).

The protein belongs to the SlyX family.

This chain is Protein SlyX homolog, found in Pseudomonas fluorescens (strain Pf0-1).